A 157-amino-acid polypeptide reads, in one-letter code: Large ribosomal subunit protein uL3 (157 aa).

The disordered stretch occupies residues 57–98; that stretch reads GKGFAGSIKRHNQSRGPESHGSRYHRRPGSMGPIKGKLKGKK.

It belongs to the universal ribosomal protein uL3 family. As to quaternary structure, part of the 50S ribosomal subunit. Forms a cluster with proteins L14 and L19.

In terms of biological role, one of the primary rRNA binding proteins, it binds directly near the 3'-end of the 23S rRNA, where it nucleates assembly of the 50S subunit. In Onion yellows phytoplasma (strain OY-M), this protein is Large ribosomal subunit protein uL3 (rplC).